Consider the following 750-residue polypeptide: Photosystem I P700 chlorophyll a apoprotein A1 (750 aa).

The next 8 membrane-spanning stretches (helical) occupy residues 70–93 (VFSA…FHGA), 156–179 (LYCT…FHYH), 195–219 (LNHH…HVSL), 291–309 (IAHH…GHMY), 346–369 (WHAQ…HHMY), 385–411 (LSLF…IFMV), 433–455 (AIIS…LYIH), and 531–549 (FLVH…LILL). Residues C573 and C582 each coordinate [4Fe-4S] cluster. Transmembrane regions (helical) follow at residues 589–610 (HVFL…HFSW) and 664–686 (LSAY…MFLF). H675 serves as a coordination point for chlorophyll a'. The chlorophyll a site is built by M683 and Y691. W692 contacts phylloquinone. Residues 724–744 (AVGVTHYLLGGIATTWAFFLA) traverse the membrane as a helical segment.

It belongs to the PsaA/PsaB family. The PsaA/B heterodimer binds the P700 chlorophyll special pair and subsequent electron acceptors. PSI consists of a core antenna complex that captures photons, and an electron transfer chain that converts photonic excitation into a charge separation. The eukaryotic PSI reaction center is composed of at least 11 subunits. Requires P700 is a chlorophyll a/chlorophyll a' dimer, A0 is one or more chlorophyll a, A1 is one or both phylloquinones and FX is a shared 4Fe-4S iron-sulfur center. as cofactor.

It localises to the plastid. It is found in the chloroplast thylakoid membrane. It catalyses the reaction reduced [plastocyanin] + hnu + oxidized [2Fe-2S]-[ferredoxin] = oxidized [plastocyanin] + reduced [2Fe-2S]-[ferredoxin]. Its function is as follows. PsaA and PsaB bind P700, the primary electron donor of photosystem I (PSI), as well as the electron acceptors A0, A1 and FX. PSI is a plastocyanin-ferredoxin oxidoreductase, converting photonic excitation into a charge separation, which transfers an electron from the donor P700 chlorophyll pair to the spectroscopically characterized acceptors A0, A1, FX, FA and FB in turn. Oxidized P700 is reduced on the lumenal side of the thylakoid membrane by plastocyanin. The polypeptide is Photosystem I P700 chlorophyll a apoprotein A1 (Atropa belladonna (Belladonna)).